Here is a 1040-residue protein sequence, read N- to C-terminus: MAASLPSTLSFSSAPDEIQHPQIKFSEWKFKLFRVRSFEKAPEEAQKEKDSSEGKPYLEQSPVVPEKPGGQNSILTQRALKLHPKFSKKFHADGKSSDKAVHQARLRHFCRICGNRFKSDGHSRRYPVHGPVDAKTQSLFRKKEKRVTSWPDLIARIFRIDVKADVDSIHPTEFCHDCWSIMHRKFSSSHSQVYFPRKVTVEWHPHTPSCDICFTAHRGLKRKRHQPNVQLSKKLKTVLNHARRDRRKRTQARVSSKEVLKKISNCSKIHLSTKLLAVDFPAHFVKSISCQICEHILADPVETSCKHLFCRICILRCLKVMGSYCPSCRYPCFPTDLESPVKSFLNILNSLMVKCPAQDCNEEVSLEKYNHHVSSHKESKETLVHINKGGRPRQHLLSLTRRAQKHRLRELKIQVKEFADKEEGGDVKAVCLTLFLLALRARNEHRQADELEAIMQGRGSGLQPAVCLAIRVNTFLSCSQYHKMYRTVKAITGRQIFQPLHALRNAEKVLLPGYHPFEWQPPLKNVSSRTDVGIIDGLSGLASSVDEYPVDTIAKRFRYDSALVSALMDMEEDILEGMRSQDLDDYLNGPFTVVVKESCDGMGDVSEKHGSGPAVPEKAVRFSFTVMRITIEHGSQNVKVFEEPKPNSELCCKPLCLMLADESDHETLTAILSPLIAEREAMKSSELTLEMGGIPRTFKFIFRGTGYDEKLVREVEGLEASGSVYICTLCDTTRLEASQNLVFHSITRSHAENLQRYEVWRSNPYHESVEELRDRVKGVSAKPFIETVPSIDALHCDIGNAAEFYKIFQLEIGEVYKHPNASKEERKRWQATLDKHLRKRMNLKPIMRMNGNFARKLMTQETVDAVCELIPSEERHEALRELMDLYLKMKPVWRSSCPAKECPESLCQYSFNSQRFAELLSTKFKYRYEGKITNYFHKTLAHVPEIIERDGSIGAWASEGNESGNKLFRRFRKMNARQSKCYEMEDVLKHHWLYTSKYLQKFMNAHNALKSSGFTMNSKETLGDPLGIEDSLESQDSMEF.

Positions 39 to 53 (EKAPEEAQKEKDSSE) are enriched in basic and acidic residues. The disordered stretch occupies residues 39–71 (EKAPEEAQKEKDSSEGKPYLEQSPVVPEKPGGQ). Residue Lys-233 forms a Glycyl lysine isopeptide (Lys-Gly) (interchain with G-Cter in ubiquitin) linkage. Zn(2+)-binding residues include Cys-266, His-270, Cys-290, Cys-293, His-295, Cys-305, His-307, Cys-310, Cys-313, Cys-325, Cys-328, Cys-355, Cys-360, His-372, and His-376. Residues 290–329 (CQICEHILADPVETSCKHLFCRICILRCLKVMGSYCPSCR) form an RING-type zinc finger. The RAG1-type zinc-finger motif lies at 351 to 380 (LMVKCPAQDCNEEVSLEKYNHHVSSHKESK). Positions 389-456 (GGRPRQHLLS…QADELEAIMQ (68 aa)) form a DNA-binding region, NBD. Asp-600, Asp-708, and Glu-962 together coordinate a divalent metal cation.

This sequence belongs to the RAG1 family. Homodimer. Component of the RAG complex composed of core components RAG1 and RAG2, and associated component HMGB1 or HMGB2. Interacts with DCAF1, leading to recruitment of the CUL4A-RBX1-DDB1-DCAF1/VPRBP complex to ubiquitinate proteins and limit error-prone repair during V(D)J recombination. Requires Mg(2+) as cofactor. Mn(2+) serves as cofactor. In terms of processing, autoubiquitinated in the presence of CDC34/UBCH3. As to expression, maturing lymphoid cells and central nervous system.

It is found in the nucleus. It carries out the reaction S-ubiquitinyl-[E2 ubiquitin-conjugating enzyme]-L-cysteine + [acceptor protein]-L-lysine = [E2 ubiquitin-conjugating enzyme]-L-cysteine + N(6)-ubiquitinyl-[acceptor protein]-L-lysine.. In terms of biological role, catalytic component of the RAG complex, a multiprotein complex that mediates the DNA cleavage phase during V(D)J recombination. V(D)J recombination assembles a diverse repertoire of immunoglobulin and T-cell receptor genes in developing B and T-lymphocytes through rearrangement of different V (variable), in some cases D (diversity), and J (joining) gene segments. In the RAG complex, RAG1 mediates the DNA-binding to the conserved recombination signal sequences (RSS) and catalyzes the DNA cleavage activities by introducing a double-strand break between the RSS and the adjacent coding segment. RAG2 is not a catalytic component but is required for all known catalytic activities. DNA cleavage occurs in 2 steps: a first nick is introduced in the top strand immediately upstream of the heptamer, generating a 3'-hydroxyl group that can attack the phosphodiester bond on the opposite strand in a direct transesterification reaction, thereby creating 4 DNA ends: 2 hairpin coding ends and 2 blunt, 5'-phosphorylated ends. The chromatin structure plays an essential role in the V(D)J recombination reactions and the presence of histone H3 trimethylated at 'Lys-4' (H3K4me3) stimulates both the nicking and haipinning steps. The RAG complex also plays a role in pre-B cell allelic exclusion, a process leading to expression of a single immunoglobulin heavy chain allele to enforce clonality and monospecific recognition by the B-cell antigen receptor (BCR) expressed on individual B-lymphocytes. The introduction of DNA breaks by the RAG complex on one immunoglobulin allele induces ATM-dependent repositioning of the other allele to pericentromeric heterochromatin, preventing accessibility to the RAG complex and recombination of the second allele. In addition to its endonuclease activity, RAG1 also acts as an E3 ubiquitin-protein ligase that mediates monoubiquitination of histone H3. Histone H3 monoubiquitination is required for the joining step of V(D)J recombination. Mediates polyubiquitination of KPNA1. The chain is V(D)J recombination-activating protein 1 (Rag1) from Mus musculus (Mouse).